A 337-amino-acid chain; its full sequence is Large ribosomal subunit protein uL3 (337 aa).

The tract at residues 1-32 (MAKGHRPRRGSLAYSPRKRSQSHIPRFRSWPE) is disordered.

It belongs to the universal ribosomal protein uL3 family. In terms of assembly, part of the 50S ribosomal subunit. Forms a cluster with proteins L14 and L24e.

One of the primary rRNA binding proteins, it binds directly near the 3'-end of the 23S rRNA, where it nucleates assembly of the 50S subunit. In Methanococcoides burtonii (strain DSM 6242 / NBRC 107633 / OCM 468 / ACE-M), this protein is Large ribosomal subunit protein uL3.